Consider the following 261-residue polypeptide: Fructoselysine 6-kinase (261 aa).

It belongs to the carbohydrate kinase PfkB family. As to quaternary structure, monomer.

It carries out the reaction N(6)-(D-fructosyl)-L-lysine + ATP = N(6)-(6-phospho-D-fructosyl)-L-lysine + ADP + H(+). The protein operates within carbohydrate metabolism; fructoselysine degradation; D-glucose 6-phosphate and lysine from fructoselysine: step 1/2. Functionally, catalyzes the ATP-dependent phosphorylation of fructoselysine to fructoselysine 6-phosphate. Functions in a fructoselysine degradation pathway that allows E.coli to grow on fructoselysine or psicoselysine. To a much lesser extenst, is also able to phosphorylate psicoselysine. This chain is Fructoselysine 6-kinase, found in Escherichia coli (strain K12).